The primary structure comprises 286 residues: 33 kDa chaperonin (286 aa).

2 disulfide bridges follow: Cys225/Cys227 and Cys258/Cys261.

This sequence belongs to the HSP33 family. Under oxidizing conditions two disulfide bonds are formed involving the reactive cysteines. Under reducing conditions zinc is bound to the reactive cysteines and the protein is inactive.

It is found in the cytoplasm. In terms of biological role, redox regulated molecular chaperone. Protects both thermally unfolding and oxidatively damaged proteins from irreversible aggregation. Plays an important role in the bacterial defense system toward oxidative stress. This chain is 33 kDa chaperonin, found in Shewanella sp. (strain ANA-3).